The sequence spans 56 residues: Large ribosomal subunit protein bL32 (56 aa).

Residues 1 to 37 are disordered; the sequence is MAVQQNKPTRSKRGMRRSHDALTAPLLSVDKTSGETH.

It belongs to the bacterial ribosomal protein bL32 family.

The polypeptide is Large ribosomal subunit protein bL32 (Photorhabdus laumondii subsp. laumondii (strain DSM 15139 / CIP 105565 / TT01) (Photorhabdus luminescens subsp. laumondii)).